The primary structure comprises 252 residues: Ribosomal RNA small subunit methyltransferase J (252 aa).

S-adenosyl-L-methionine contacts are provided by residues 101–102, 117–118, 153–154, and aspartate 171; these read RD, ER, and SS.

Belongs to the methyltransferase superfamily. RsmJ family.

The protein resides in the cytoplasm. It catalyses the reaction guanosine(1516) in 16S rRNA + S-adenosyl-L-methionine = N(2)-methylguanosine(1516) in 16S rRNA + S-adenosyl-L-homocysteine + H(+). Specifically methylates the guanosine in position 1516 of 16S rRNA. The chain is Ribosomal RNA small subunit methyltransferase J from Salmonella heidelberg (strain SL476).